A 286-amino-acid chain; its full sequence is MANMKDVKRRIKSVESTMQITKAMQLVASSKMRKAKERAEAVHPFFEGVFQVMADISRDHEFTSVFTKKKFKNSVLLIVIAGDRGLAGGFNTNVLKLAKAKADAITESGGEAVIMAIGKKAVEYFEKREYKLIDGFPQIAEGIELIDAMMIANKVIERFKIGDFDAVELVYTTFVSVMTQEPQHLRILPVENLEYLGQKHPMTIYDPSPEEVFDSLIPEYMGGMLYSAIVDSFASEQAARRTAMESASDNANEMIEKLSLLYNRARQAQITQEITEISSASLNDNS.

Belongs to the ATPase gamma chain family. In terms of assembly, F-type ATPases have 2 components, CF(1) - the catalytic core - and CF(0) - the membrane proton channel. CF(1) has five subunits: alpha(3), beta(3), gamma(1), delta(1), epsilon(1). CF(0) has three main subunits: a, b and c.

It localises to the cell membrane. In terms of biological role, produces ATP from ADP in the presence of a proton gradient across the membrane. The gamma chain is believed to be important in regulating ATPase activity and the flow of protons through the CF(0) complex. The polypeptide is ATP synthase gamma chain (Ruminococcus albus (strain ATCC 27210 / DSM 20455 / JCM 14654 / NCDO 2250 / 7)).